Reading from the N-terminus, the 214-residue chain is Cytochrome c biogenesis ATP-binding export protein CcmA (214 aa).

Residues L12–A214 enclose the ABC transporter domain. ATP is bound at residue G44 to T51.

It belongs to the ABC transporter superfamily. CcmA exporter (TC 3.A.1.107) family. The complex is composed of two ATP-binding proteins (CcmA) and two transmembrane proteins (CcmB).

The protein resides in the cell inner membrane. It carries out the reaction heme b(in) + ATP + H2O = heme b(out) + ADP + phosphate + H(+). Part of the ABC transporter complex CcmAB involved in the biogenesis of c-type cytochromes; once thought to export heme, this seems not to be the case, but its exact role is uncertain. Responsible for energy coupling to the transport system. This is Cytochrome c biogenesis ATP-binding export protein CcmA from Xanthomonas campestris pv. campestris (strain 8004).